Here is a 131-residue protein sequence, read N- to C-terminus: Small ribosomal subunit protein uS8 (131 aa).

The protein belongs to the universal ribosomal protein uS8 family. Part of the 30S ribosomal subunit. Contacts proteins S5 and S12.

One of the primary rRNA binding proteins, it binds directly to 16S rRNA central domain where it helps coordinate assembly of the platform of the 30S subunit. This Chlorobium limicola (strain DSM 245 / NBRC 103803 / 6330) protein is Small ribosomal subunit protein uS8.